We begin with the raw amino-acid sequence, 303 residues long: Coenzyme PQQ synthesis protein B (303 aa).

Belongs to the PqqB family.

The protein operates within cofactor biosynthesis; pyrroloquinoline quinone biosynthesis. Functionally, may be involved in the transport of PQQ or its precursor to the periplasm. In Pseudomonas syringae pv. syringae (strain B728a), this protein is Coenzyme PQQ synthesis protein B.